The chain runs to 199 residues: ATP-dependent Clp protease proteolytic subunit (199 aa).

The active-site Nucleophile is the Ser-98. The active site involves His-123.

Belongs to the peptidase S14 family. As to quaternary structure, fourteen ClpP subunits assemble into 2 heptameric rings which stack back to back to give a disk-like structure with a central cavity, resembling the structure of eukaryotic proteasomes.

Its subcellular location is the cytoplasm. It catalyses the reaction Hydrolysis of proteins to small peptides in the presence of ATP and magnesium. alpha-casein is the usual test substrate. In the absence of ATP, only oligopeptides shorter than five residues are hydrolyzed (such as succinyl-Leu-Tyr-|-NHMec, and Leu-Tyr-Leu-|-Tyr-Trp, in which cleavage of the -Tyr-|-Leu- and -Tyr-|-Trp bonds also occurs).. In terms of biological role, cleaves peptides in various proteins in a process that requires ATP hydrolysis. Has a chymotrypsin-like activity. Plays a major role in the degradation of misfolded proteins. The protein is ATP-dependent Clp protease proteolytic subunit of Clostridium botulinum (strain Alaska E43 / Type E3).